Reading from the N-terminus, the 166-residue chain is SsrA-binding protein (166 aa).

It belongs to the SmpB family.

It is found in the cytoplasm. Its function is as follows. Required for rescue of stalled ribosomes mediated by trans-translation. Binds to transfer-messenger RNA (tmRNA), required for stable association of tmRNA with ribosomes. tmRNA and SmpB together mimic tRNA shape, replacing the anticodon stem-loop with SmpB. tmRNA is encoded by the ssrA gene; the 2 termini fold to resemble tRNA(Ala) and it encodes a 'tag peptide', a short internal open reading frame. During trans-translation Ala-aminoacylated tmRNA acts like a tRNA, entering the A-site of stalled ribosomes, displacing the stalled mRNA. The ribosome then switches to translate the ORF on the tmRNA; the nascent peptide is terminated with the 'tag peptide' encoded by the tmRNA and targeted for degradation. The ribosome is freed to recommence translation, which seems to be the essential function of trans-translation. The polypeptide is SsrA-binding protein (Parasynechococcus marenigrum (strain WH8102)).